We begin with the raw amino-acid sequence, 314 residues long: Prohormone-3 (314 aa).

The N-terminal stretch at 1–19 (MGRVLLSASSLLLHIQVFT) is a signal peptide. The helical transmembrane segment at 90 to 112 (YTCVALTVVALVSTMHFGVEAWG) threads the bilayer.

The protein resides in the membrane. The sequence is that of Prohormone-3 from Apis mellifera (Honeybee).